Consider the following 312-residue polypeptide: Ribonuclease HIII (312 aa).

The RNase H type-2 domain maps to Phe95 to Pro311. The a divalent metal cation site is built by Asp101, Glu102, and Asp206.

The protein belongs to the RNase HII family. RnhC subfamily. Mn(2+) serves as cofactor. It depends on Mg(2+) as a cofactor.

The protein resides in the cytoplasm. It carries out the reaction Endonucleolytic cleavage to 5'-phosphomonoester.. Functionally, endonuclease that specifically degrades the RNA of RNA-DNA hybrids. This chain is Ribonuclease HIII, found in Staphylococcus aureus (strain Mu3 / ATCC 700698).